A 402-amino-acid chain; its full sequence is Probable tRNA sulfurtransferase (402 aa).

The THUMP domain occupies Glu-61–Val-166. ATP is bound by residues Met-184 to Leu-185, His-209 to Phe-210, Arg-266, Gly-288, and Gln-297.

This sequence belongs to the ThiI family.

The protein localises to the cytoplasm. The enzyme catalyses [ThiI sulfur-carrier protein]-S-sulfanyl-L-cysteine + a uridine in tRNA + 2 reduced [2Fe-2S]-[ferredoxin] + ATP + H(+) = [ThiI sulfur-carrier protein]-L-cysteine + a 4-thiouridine in tRNA + 2 oxidized [2Fe-2S]-[ferredoxin] + AMP + diphosphate. The catalysed reaction is [ThiS sulfur-carrier protein]-C-terminal Gly-Gly-AMP + S-sulfanyl-L-cysteinyl-[cysteine desulfurase] + AH2 = [ThiS sulfur-carrier protein]-C-terminal-Gly-aminoethanethioate + L-cysteinyl-[cysteine desulfurase] + A + AMP + 2 H(+). Its pathway is cofactor biosynthesis; thiamine diphosphate biosynthesis. In terms of biological role, catalyzes the ATP-dependent transfer of a sulfur to tRNA to produce 4-thiouridine in position 8 of tRNAs, which functions as a near-UV photosensor. Also catalyzes the transfer of sulfur to the sulfur carrier protein ThiS, forming ThiS-thiocarboxylate. This is a step in the synthesis of thiazole, in the thiamine biosynthesis pathway. The sulfur is donated as persulfide by IscS. This is Probable tRNA sulfurtransferase from Macrococcus caseolyticus (strain JCSC5402) (Macrococcoides caseolyticum).